The sequence spans 205 residues: Urease accessory protein UreG (205 aa).

Position 10–17 (10–17 (GPVGAGKT)) interacts with GTP.

This sequence belongs to the SIMIBI class G3E GTPase family. UreG subfamily. Homodimer. UreD, UreF and UreG form a complex that acts as a GTP-hydrolysis-dependent molecular chaperone, activating the urease apoprotein by helping to assemble the nickel containing metallocenter of UreC. The UreE protein probably delivers the nickel.

It is found in the cytoplasm. Its function is as follows. Facilitates the functional incorporation of the urease nickel metallocenter. This process requires GTP hydrolysis, probably effectuated by UreG. In Corynebacterium glutamicum (strain ATCC 13032 / DSM 20300 / JCM 1318 / BCRC 11384 / CCUG 27702 / LMG 3730 / NBRC 12168 / NCIMB 10025 / NRRL B-2784 / 534), this protein is Urease accessory protein UreG.